We begin with the raw amino-acid sequence, 754 residues long: ATP-dependent RNA helicase DRS1 (754 aa).

Disordered regions lie at residues 1 to 61 and 119 to 227; these read MVVG…NLDE and GLVK…GDEA. Positions 19–34 are enriched in acidic residues; the sequence is DSEDDVPILDSSDDEK. A compositionally biased stretch (basic residues) spans 40–51; sequence TTKKRKGKNNKK. Over residues 124–142 the composition is skewed to basic and acidic residues; it reads AHIDSKQEEETEKEKVEKE. Composition is skewed to acidic residues over residues 167–193 and 202–211; these read NQSEEEEEEEEEEEEEEEEEEEEQEEM and DEIDEEDDSE. The residue at position 210 (S210) is a Phosphoserine. The Q motif signature appears at 233-261; that stretch reads ENFNSLSLSRPVLKGLASLGYVKPSPIQS. In terms of domain architecture, Helicase ATP-binding spans 264–439; sequence IPIALLGKDI…SLSLKKPVRI (176 aa). 277 to 284 contacts ATP; that stretch reads AVTGSGKT. Positions 387 to 390 match the DEAD box motif; it reads DEAD. Positions 450 to 641 constitute a Helicase C-terminal domain; that stretch reads KLTQEFVRIR…SMNDTIEDIL (192 aa). The stretch at 623-669 forms a coiled coil; it reads IEETNKLVESMNDTIEDILVEEKEEKEILRAEMQLRKGENMLKHKKE. Residues 675-754 form a disordered region; sequence RRTWFQSESD…NKKKGFKSRR (80 aa). The span at 696 to 707 shows a compositional bias: basic residues; sequence RNKKVTNSKKRK. Positions 724–736 are enriched in basic and acidic residues; sequence TKTDRIADQERTF. A compositionally biased stretch (basic residues) spans 737 to 754; that stretch reads KKQKSTNSNKKKGFKSRR.

The protein belongs to the DEAD box helicase family. DDX27/DRS1 subfamily. In terms of assembly, interacts with RRP1 and associates with pre-ribosomal particles.

It is found in the nucleus. It localises to the nucleolus. The catalysed reaction is ATP + H2O = ADP + phosphate + H(+). In terms of biological role, ATP-binding RNA helicase involved in ribosome assembly. This Saccharomyces cerevisiae (strain YJM789) (Baker's yeast) protein is ATP-dependent RNA helicase DRS1 (DRS1).